The following is a 327-amino-acid chain: Methionyl-tRNA formyltransferase (327 aa).

A (6S)-5,6,7,8-tetrahydrofolate-binding site is contributed by S117 to P120.

Belongs to the Fmt family.

The enzyme catalyses L-methionyl-tRNA(fMet) + (6R)-10-formyltetrahydrofolate = N-formyl-L-methionyl-tRNA(fMet) + (6S)-5,6,7,8-tetrahydrofolate + H(+). Functionally, attaches a formyl group to the free amino group of methionyl-tRNA(fMet). The formyl group appears to play a dual role in the initiator identity of N-formylmethionyl-tRNA by promoting its recognition by IF2 and preventing the misappropriation of this tRNA by the elongation apparatus. This is Methionyl-tRNA formyltransferase from Delftia acidovorans (strain DSM 14801 / SPH-1).